The chain runs to 202 residues: uncharacterized protein (202 aa).

The Cytoplasmic segment spans residues 1–6 (MITDFL). The chain crosses the membrane as a helical; Signal-anchor for type II membrane protein span at residues 7–23 (LAFSILAVSTTLGVSNL). Over 24-202 (NKQCRDLLQC…KNGKTRGHSG (179 aa)) the chain is Extracellular. Asn-53 carries N-linked (GlcNAc...) asparagine glycosylation.

Its subcellular location is the membrane. This is an uncharacterized protein from Caenorhabditis elegans.